A 703-amino-acid polypeptide reads, in one-letter code: Histone-lysine N-methyltransferase SETDB2 (703 aa).

The 71-residue stretch at 178–248 (FTKGNPLQLP…DNFSFNNHVR (71 aa)) folds into the MBD domain. One can recognise a Pre-SET domain in the interval 310–384 (KCCNCTDGCL…LCQNRVVQHG (75 aa)). Positions 312, 314, 318, 324, 326, 365, 369, 371, and 376 each coordinate Zn(2+). An SET domain is found at 387-678 (LRLQVFKTNT…AGTELTWDYS (292 aa)). 397–399 (KGW) is a binding site for S-adenosyl-L-methionine. Positions 492–588 (TFSPRQARSG…SSSVISGGHP (97 aa)) are disordered. Basic residues predominate over residues 511–525 (RRPKTKTSMLQKRRR). Residues 550 to 560 (PEQKSSAGTKI) show a composition bias toward polar residues. Positions 571–586 (SGYVSEESSSSVISGG) are enriched in low complexity. S-adenosyl-L-methionine is bound by residues Arg-632 and 635–636 (NH). Residues Cys-638, Cys-691, Cys-693, and Cys-698 each contribute to the Zn(2+) site.

Belongs to the class V-like SAM-binding methyltransferase superfamily.

Its subcellular location is the nucleus. It is found in the chromosome. The enzyme catalyses N(6),N(6)-dimethyl-L-lysyl(9)-[histone H3] + S-adenosyl-L-methionine = N(6),N(6),N(6)-trimethyl-L-lysyl(9)-[histone H3] + S-adenosyl-L-homocysteine + H(+). Functionally, histone methyltransferase involved in left-right axis specification in early development and mitosis. Specifically trimethylates 'Lys-9' of histone H3 (H3K9me3). H3K9me3 is a specific tag for epigenetic transcriptional repression that recruits HP1 (CBX1, CBX3 and/or CBX5) proteins to methylated histones. Contributes to H3K9me3 in both the interspersed repetitive elements and centromere-associated repeats. Plays a role in chromosome condensation and segregation during mitosis. This chain is Histone-lysine N-methyltransferase SETDB2 (setdb2), found in Xenopus laevis (African clawed frog).